A 270-amino-acid chain; its full sequence is uncharacterized protein (270 aa).

The 50-residue stretch at 1–50 (LTEVVKAQSFTKAAENLYTSQPSISRDIKRLENDYDVKVFEFKHSKMTLT) folds into the HTH lysR-type domain. The H-T-H motif DNA-binding region spans 10–29 (FTKAAENLYTSQPSISRDIK).

Belongs to the LysR transcriptional regulatory family.

This is an uncharacterized protein from Staphylococcus xylosus.